The following is a 78-amino-acid chain: Small ribosomal subunit protein uS17 (78 aa).

The protein belongs to the universal ribosomal protein uS17 family. Part of the 30S ribosomal subunit.

One of the primary rRNA binding proteins, it binds specifically to the 5'-end of 16S ribosomal RNA. In Rhizobium meliloti (strain 1021) (Ensifer meliloti), this protein is Small ribosomal subunit protein uS17.